A 230-amino-acid polypeptide reads, in one-letter code: UPF0173 metal-dependent hydrolase MM_2300 (230 aa).

It belongs to the UPF0173 family.

The sequence is that of UPF0173 metal-dependent hydrolase MM_2300 from Methanosarcina mazei (strain ATCC BAA-159 / DSM 3647 / Goe1 / Go1 / JCM 11833 / OCM 88) (Methanosarcina frisia).